The following is a 383-amino-acid chain: Protein delta homolog 1 (383 aa).

The N-terminal stretch at 1–23 (MTATEALLRVLLLLLAFGHSTYG) is a signal peptide. 6 EGF-like domains span residues 24–55 (AECF…PLCD), 53–86 (LCDQ…ELCD), 88–125 (DVRA…KDCQ), 127–168 (KDGP…NFCE), 170–206 (VANS…KTCS), and 208–245 (PVTN…LTCV). The Extracellular portion of the chain corresponds to 24-303 (AECFPACNPQ…KKTPLLTEGQ (280 aa)). Cystine bridges form between Cys26-Cys37, Cys30-Cys43, Cys45-Cys54, Cys57-Cys68, Cys63-Cys74, Cys76-Cys85, Cys92-Cys103, Cys97-Cys113, Cys115-Cys124, Cys131-Cys144, Cys138-Cys156, and Cys158-Cys167. An O-linked (GalNAc...) serine glycan is attached at Ser94. An N-linked (GlcNAc...) asparagine glycan is attached at Asn100. Thr143 carries O-linked (GalNAc...) threonine glycosylation. A glycan (O-linked (GalNAc...) serine; partial) is linked at Ser163. N-linked (GlcNAc...) asparagine; atypical; partial glycans are attached at residues Asn165 and Asn172. Disulfide bonds link Cys174–Cys185, Cys179–Cys194, Cys196–Cys205, Cys212–Cys223, Cys217–Cys233, and Cys235–Cys244. Ser214 carries O-linked (GalNAc...) serine glycosylation. The O-linked (GalNAc...) threonine; partial glycan is linked to Thr222. O-linked (GalNAc...) serine; partial glycosylation is present at Ser251. Thr256 carries an O-linked (GalNAc...) threonine glycan. Residue Ser260 is glycosylated (O-linked (GalNAc...) serine; partial). Residues 304-327 (AICFTILGVLTSLVVLGTVGIVFL) form a helical membrane-spanning segment. Topologically, residues 328-383 (NKCETWVSNLRYNHMLRKKKNLLLQYNSGEDLAVNIIFPEKIDMTTFSKEAGDEEI) are cytoplasmic.

As to quaternary structure, monomer. Interacts with SH3RF2. In terms of processing, N- and O-glycosylated. O-glycosylated with core 1 or possibly core 8 glycans. Found within the stromal cells in close contact to the vascular structure of placental villi, yolk sac, fetal liver, adrenal cortex and pancreas and in the beta cells of the islets of Langerhans in the adult pancreas. Found also in some forms of neuroendocrine lung tumor tissue.

Its subcellular location is the membrane. It is found in the cytoplasm. Functionally, may have a role in neuroendocrine differentiation. This Homo sapiens (Human) protein is Protein delta homolog 1 (DLK1).